A 136-amino-acid polypeptide reads, in one-letter code: DNA-directed RNA polymerase subunit omega (136 aa).

The protein belongs to the RNA polymerase subunit omega family. In terms of assembly, the RNAP catalytic core consists of 2 alpha, 1 beta, 1 beta' and 1 omega subunit. When a sigma factor is associated with the core the holoenzyme is formed, which can initiate transcription.

It catalyses the reaction RNA(n) + a ribonucleoside 5'-triphosphate = RNA(n+1) + diphosphate. In terms of biological role, promotes RNA polymerase assembly. Latches the N- and C-terminal regions of the beta' subunit thereby facilitating its interaction with the beta and alpha subunits. This chain is DNA-directed RNA polymerase subunit omega, found in Acidiphilium cryptum (strain JF-5).